The sequence spans 357 residues: SrfA-induced gene J protein (357 aa).

Residues 1 to 29 (MGRVEDQIKDNYNSLSHEGERLNREAKIE) are disordered. A coiled-coil region spans residues 5 to 51 (EDQIKDNYNSLSHEGERLNREAKIESEKLKNNAKLDAKDMKKDIDES). A compositionally biased stretch (basic and acidic residues) spans 17-29 (HEGERLNREAKIE). N-linked (GlcNAc...) asparagine glycosylation is found at N114, N157, and N172. 2 coiled-coil regions span residues 150–177 (KNFK…SNKI) and 223–270 (DETK…DAIE). A helical membrane pass occupies residues 290–307 (IWGSIGLIGGATATSYLF).

It is found in the membrane. The chain is SrfA-induced gene J protein (sigJ) from Dictyostelium discoideum (Social amoeba).